Consider the following 120-residue polypeptide: Large ribosomal subunit protein bL12 (120 aa).

It belongs to the bacterial ribosomal protein bL12 family. In terms of assembly, homodimer. Part of the ribosomal stalk of the 50S ribosomal subunit. Forms a multimeric L10(L12)X complex, where L10 forms an elongated spine to which 2 to 4 L12 dimers bind in a sequential fashion. Binds GTP-bound translation factors.

Forms part of the ribosomal stalk which helps the ribosome interact with GTP-bound translation factors. Is thus essential for accurate translation. The chain is Large ribosomal subunit protein bL12 from Lactobacillus acidophilus (strain ATCC 700396 / NCK56 / N2 / NCFM).